Reading from the N-terminus, the 220-residue chain is Imidazoleglycerol-phosphate dehydratase (220 aa).

This sequence belongs to the imidazoleglycerol-phosphate dehydratase family.

It carries out the reaction D-erythro-1-(imidazol-4-yl)glycerol 3-phosphate = 3-(imidazol-4-yl)-2-oxopropyl phosphate + H2O. It functions in the pathway amino-acid biosynthesis; L-histidine biosynthesis; L-histidine from 5-phospho-alpha-D-ribose 1-diphosphate: step 6/9. The chain is Imidazoleglycerol-phosphate dehydratase (HIS3) from Eremothecium gossypii (strain ATCC 10895 / CBS 109.51 / FGSC 9923 / NRRL Y-1056) (Yeast).